The primary structure comprises 344 residues: Protein pelota homolog (344 aa).

Belongs to the eukaryotic release factor 1 family. Pelota subfamily. Monomer. A divalent metal cation serves as cofactor.

It localises to the cytoplasm. In terms of biological role, may function in recognizing stalled ribosomes, interact with stem-loop structures in stalled mRNA molecules, and effect endonucleolytic cleavage of the mRNA. May play a role in the release non-functional ribosomes and degradation of damaged mRNAs. Has endoribonuclease activity. The polypeptide is Protein pelota homolog (Archaeoglobus fulgidus (strain ATCC 49558 / DSM 4304 / JCM 9628 / NBRC 100126 / VC-16)).